We begin with the raw amino-acid sequence, 274 residues long: Large ribosomal subunit protein uL2 (274 aa).

The segment at V223–K274 is disordered. Over residues F256 to K274 the composition is skewed to basic residues.

Belongs to the universal ribosomal protein uL2 family. In terms of assembly, part of the 50S ribosomal subunit. Forms a bridge to the 30S subunit in the 70S ribosome.

One of the primary rRNA binding proteins. Required for association of the 30S and 50S subunits to form the 70S ribosome, for tRNA binding and peptide bond formation. It has been suggested to have peptidyltransferase activity; this is somewhat controversial. Makes several contacts with the 16S rRNA in the 70S ribosome. This chain is Large ribosomal subunit protein uL2, found in Vibrio atlanticus (strain LGP32) (Vibrio splendidus (strain Mel32)).